Here is a 112-residue protein sequence, read N- to C-terminus: MLPYISWNTQRAPLRLRHLRHVRLRAHPPHAMGSPTQPIRARACRPRMAAGARLARMQDRLLRRAPAARGLYRGRRPPGRDAARPTTAILFAQGRPPLLDQRAPTRRGSHQR.

The segment at 70-112 (GLYRGRRPPGRDAARPTTAILFAQGRPPLLDQRAPTRRGSHQR) is disordered.

This is an uncharacterized protein from Homo sapiens (Human).